The chain runs to 969 residues: Translation initiation factor IF-2 (969 aa).

A disordered region spans residues 50–370; it reads SFASKSAPAN…QAPSVGGVRL (321 aa). Positions 54 to 76 are enriched in low complexity; sequence KSAPANGAKPGPAASARPGAKPT. Pro residues predominate over residues 77-87; that stretch reads PGGPRPGPRTP. Over residues 88–102 the composition is skewed to low complexity; that stretch reads APAASAPQAPAEQTA. The span at 112–124 shows a compositional bias: pro residues; it reads AVKPGPAPTPARP. Residues 125–164 are compositionally biased toward low complexity; the sequence is AAPEAPAAKAAPEAPAQRPTPGGPRPGQQQQRPGAPAQGG. The segment covering 240–267 has biased composition (pro residues); it reads PGGPRPSPGSMPPRPNPGAMPQRTPRPG. Positions 269 to 340 are enriched in gly residues; it reads SAGGRPGRPG…GAAGAFGRPG (72 aa). Residues 344–353 show a composition bias toward basic residues; it reads RRGRKSKRQK. The 172-residue stretch at 465–636 folds into the tr-type G domain; the sequence is VRPPVVTVMG…AVLLTADAAL (172 aa). The segment at 474 to 481 is G1; the sequence is GHVDHGKT. GTP is bound at residue 474-481; that stretch reads GHVDHGKT. Residues 499 to 503 form a G2 region; that stretch reads GITQH. The segment at 524 to 527 is G3; it reads DTPG. GTP contacts are provided by residues 524–528 and 578–581; these read DTPGH and NKID. Positions 578-581 are G4; sequence NKID. A G5 region spans residues 614 to 616; the sequence is SAK.

Belongs to the TRAFAC class translation factor GTPase superfamily. Classic translation factor GTPase family. IF-2 subfamily.

It localises to the cytoplasm. Functionally, one of the essential components for the initiation of protein synthesis. Protects formylmethionyl-tRNA from spontaneous hydrolysis and promotes its binding to the 30S ribosomal subunits. Also involved in the hydrolysis of GTP during the formation of the 70S ribosomal complex. The protein is Translation initiation factor IF-2 of Nocardia farcinica (strain IFM 10152).